The primary structure comprises 145 residues: Toxin Res (145 aa).

Belongs to the MbcT/ParT/Res family. As to quaternary structure, homodimer. Forms a complex with cognate antitoxin Xre; the 2 toxin molecules dimerize and each contacts an Xre homodimer. Most Res-Xre contacts are between the antitoxin molecule closest to the toxin.

Its function is as follows. Toxic component of a type II toxin-antitoxin (TA) system. Expression in E.coli inhibits cell growth. In vivo it is probably neutralized by cognate antitoxin Xre; this has not been shown upon expression in E.coli. Probably depletes intracellular NAD(+). The protein is Toxin Res of Pseudomonas putida (strain ATCC 47054 / DSM 6125 / CFBP 8728 / NCIMB 11950 / KT2440).